Consider the following 180-residue polypeptide: UPF0227 protein YpsIP31758_1593 (180 aa).

The protein belongs to the UPF0227 family.

This chain is UPF0227 protein YpsIP31758_1593, found in Yersinia pseudotuberculosis serotype O:1b (strain IP 31758).